Consider the following 253-residue polypeptide: HTH-type transcriptional regulator YdeO (253 aa).

One can recognise an HTH araC/xylS-type domain in the interval 137 to 233 (GKVRNIVNMK…GNSPKRVSKE (97 aa)). 2 consecutive DNA-binding regions (H-T-H motif) follow at residues 154-175 (KDICDCLYISESLLKKKLKQEQ) and 200-223 (VNKIAEQCGYASTSYFIYAFRKHF).

Functionally, induces the expression of gadE. Could also regulate the expression of other genes involved in acid resistance. The sequence is that of HTH-type transcriptional regulator YdeO (ydeO) from Shigella flexneri.